The chain runs to 109 residues: Small ribosomal subunit protein bS6 (109 aa).

The protein belongs to the bacterial ribosomal protein bS6 family.

Functionally, binds together with bS18 to 16S ribosomal RNA. This chain is Small ribosomal subunit protein bS6, found in Dehalococcoides mccartyi (strain CBDB1).